A 388-amino-acid polypeptide reads, in one-letter code: Succinate--CoA ligase [ADP-forming] subunit beta (388 aa).

The region spanning Lys-9 to Glu-244 is the ATP-grasp domain. Residues Lys-46, Gly-53–Gly-55, Glu-99, Ala-102, and Glu-107 each bind ATP. 2 residues coordinate Mg(2+): Asn-199 and Asp-213. Residues Asn-264 and Gly-321–Met-323 contribute to the substrate site.

The protein belongs to the succinate/malate CoA ligase beta subunit family. In terms of assembly, heterotetramer of two alpha and two beta subunits. It depends on Mg(2+) as a cofactor.

It catalyses the reaction succinate + ATP + CoA = succinyl-CoA + ADP + phosphate. It carries out the reaction GTP + succinate + CoA = succinyl-CoA + GDP + phosphate. It participates in carbohydrate metabolism; tricarboxylic acid cycle; succinate from succinyl-CoA (ligase route): step 1/1. Succinyl-CoA synthetase functions in the citric acid cycle (TCA), coupling the hydrolysis of succinyl-CoA to the synthesis of either ATP or GTP and thus represents the only step of substrate-level phosphorylation in the TCA. The beta subunit provides nucleotide specificity of the enzyme and binds the substrate succinate, while the binding sites for coenzyme A and phosphate are found in the alpha subunit. This is Succinate--CoA ligase [ADP-forming] subunit beta from Burkholderia ambifaria (strain MC40-6).